The chain runs to 137 residues: Large ribosomal subunit protein uL16 (137 aa).

The span at 1 to 21 (MLSPKKVKFRKRQKGRLKGKA) shows a compositional bias: basic residues. A disordered region spans residues 1–22 (MLSPKKVKFRKRQKGRLKGKAQ).

It belongs to the universal ribosomal protein uL16 family. Part of the 50S ribosomal subunit.

In terms of biological role, binds 23S rRNA and is also seen to make contacts with the A and possibly P site tRNAs. The protein is Large ribosomal subunit protein uL16 of Maridesulfovibrio salexigens (strain ATCC 14822 / DSM 2638 / NCIMB 8403 / VKM B-1763) (Desulfovibrio salexigens).